Reading from the N-terminus, the 88-residue chain is Small ribosomal subunit protein uS15c (88 aa).

The protein belongs to the universal ribosomal protein uS15 family. In terms of assembly, part of the 30S ribosomal subunit.

Its subcellular location is the plastid. The protein localises to the chloroplast. This is Small ribosomal subunit protein uS15c (rps15) from Arabis hirsuta (Hairy rock-cress).